Reading from the N-terminus, the 182-residue chain is Photosystem I assembly protein Ycf4 (182 aa).

Helical transmembrane passes span 22-42 (WAII…SSYL) and 66-86 (FYGI…LFSV).

Belongs to the Ycf4 family.

It localises to the plastid. The protein resides in the chloroplast thylakoid membrane. Functionally, seems to be required for the assembly of the photosystem I complex. The sequence is that of Photosystem I assembly protein Ycf4 from Tupiella akineta (Green alga).